A 200-amino-acid chain; its full sequence is Pyridoxal 5'-phosphate synthase subunit PdxT (200 aa).

An L-glutamine-binding site is contributed by 52 to 54 (GES). Residue C84 is the Nucleophile of the active site. L-glutamine contacts are provided by residues R115 and 143-144 (IR). Residues H179 and E181 each act as charge relay system in the active site.

Belongs to the glutaminase PdxT/SNO family. As to quaternary structure, in the presence of PdxS, forms a dodecamer of heterodimers. Only shows activity in the heterodimer.

It catalyses the reaction aldehydo-D-ribose 5-phosphate + D-glyceraldehyde 3-phosphate + L-glutamine = pyridoxal 5'-phosphate + L-glutamate + phosphate + 3 H2O + H(+). It carries out the reaction L-glutamine + H2O = L-glutamate + NH4(+). The protein operates within cofactor biosynthesis; pyridoxal 5'-phosphate biosynthesis. Catalyzes the hydrolysis of glutamine to glutamate and ammonia as part of the biosynthesis of pyridoxal 5'-phosphate. The resulting ammonia molecule is channeled to the active site of PdxS. In Methanosarcina barkeri (strain Fusaro / DSM 804), this protein is Pyridoxal 5'-phosphate synthase subunit PdxT.